A 147-amino-acid chain; its full sequence is Cyanate hydratase (147 aa).

Active-site residues include R88, E91, and S114.

Belongs to the cyanase family.

It carries out the reaction cyanate + hydrogencarbonate + 3 H(+) = NH4(+) + 2 CO2. In terms of biological role, catalyzes the reaction of cyanate with bicarbonate to produce ammonia and carbon dioxide. This is Cyanate hydratase from Cupriavidus necator (strain ATCC 17699 / DSM 428 / KCTC 22496 / NCIMB 10442 / H16 / Stanier 337) (Ralstonia eutropha).